A 185-amino-acid chain; its full sequence is ATP-dependent protease subunit HslV (185 aa).

Threonine 6 is an active-site residue. Glycine 162, cysteine 165, and threonine 168 together coordinate Na(+).

The protein belongs to the peptidase T1B family. HslV subfamily. In terms of assembly, a double ring-shaped homohexamer of HslV is capped on each side by a ring-shaped HslU homohexamer. The assembly of the HslU/HslV complex is dependent on binding of ATP.

The protein localises to the cytoplasm. It carries out the reaction ATP-dependent cleavage of peptide bonds with broad specificity.. Allosterically activated by HslU binding. Protease subunit of a proteasome-like degradation complex believed to be a general protein degrading machinery. The protein is ATP-dependent protease subunit HslV of Nitratidesulfovibrio vulgaris (strain DSM 19637 / Miyazaki F) (Desulfovibrio vulgaris).